The primary structure comprises 185 residues: Elongation factor P (185 aa).

It belongs to the elongation factor P family.

It localises to the cytoplasm. The protein operates within protein biosynthesis; polypeptide chain elongation. In terms of biological role, involved in peptide bond synthesis. Stimulates efficient translation and peptide-bond synthesis on native or reconstituted 70S ribosomes in vitro. Probably functions indirectly by altering the affinity of the ribosome for aminoacyl-tRNA, thus increasing their reactivity as acceptors for peptidyl transferase. The protein is Elongation factor P of Clostridium botulinum (strain Alaska E43 / Type E3).